Consider the following 282-residue polypeptide: Snake venom serine protease NaSP (282 aa).

The signal sequence occupies residues 1–18 (MVLIRVLASLLILQLSYS). The propeptide occupies 19–56 (KSLDDGAKESAYDDEIQQSSWGNSTVNTTLTETVVIQL). N-linked (GlcNAc...) asparagine glycosylation is found at asparagine 41 and asparagine 45. The Peptidase S1 domain occupies 57–280 (IMGGSECYKS…YIDWIRGIIA (224 aa)). 5 disulfides stabilise this stretch: cysteine 63–cysteine 195, cysteine 82–cysteine 98, cysteine 174–cysteine 241, cysteine 206–cysteine 220, and cysteine 231–cysteine 256. The Charge relay system role is filled by histidine 97. A glycan (N-linked (GlcNAc...) asparagine) is linked at asparagine 135. The active-site Charge relay system is aspartate 142. Residues asparagine 149 and asparagine 153 are each glycosylated (N-linked (GlcNAc...) asparagine). Serine 235 serves as the catalytic Charge relay system.

This sequence belongs to the peptidase S1 family. Snake venom subfamily. As to quaternary structure, monomer. As to expression, expressed by the venom gland.

Its subcellular location is the secreted. In terms of biological role, snake venom serine protease that may act in the hemostasis system of the prey. The chain is Snake venom serine protease NaSP from Naja atra (Chinese cobra).